The primary structure comprises 334 residues: Zinc-finger homeodomain protein 10 (334 aa).

Low complexity predominate over residues 1 to 15 (MMDMTPTITTTTTPT). 2 disordered regions span residues 1–33 (MMDM…QPAK) and 103–164 (FHRR…LLSL). The segment at 56 to 107 (YKECLKNHAAALGGHALDGCGEFMPSPSSISSDPTSLKCAACGCHRNFHRRD) adopts a ZF-HD dimerization-type; degenerate zinc-finger fold. Over residues 136–155 (PPPPPPPPPRSPNSASPPPI) the composition is skewed to pro residues. Positions 200–263 (RKRFRTKFSQ…NNKNTFNRRD (64 aa)) form a DNA-binding region, homeobox. The disordered stretch occupies residues 292–334 (NGHHGVGGGGELHQSVSSGGGGGGFDSDSGGANGGNVNGSSSS). Residues 309 to 328 (SGGGGGGFDSDSGGANGGNV) are compositionally biased toward gly residues.

As to quaternary structure, homo- and heterodimer with other ZFHD proteins. Interacts with MIF1, MIF2 and MIF3; these interactions prevent nuclear localization and DNA-binding to inhibit transcription regulation activity. Binds to ZHD1, ZHD2, ZHD4, ZHD5, ZHD6, ZHD7 and ZHD8. Interacts with KIN10 and KIN11. As to expression, mostly expressed in rosettes (e.g. young leaves), flowers (e.g. styles), siliques and inflorescence.

The protein resides in the nucleus. Functionally, putative transcription factor. Probably involved in establishing polarity during leaf development through the gibberellic acid (GA) signaling pathway. The sequence is that of Zinc-finger homeodomain protein 10 (ZHD10) from Arabidopsis thaliana (Mouse-ear cress).